We begin with the raw amino-acid sequence, 172 residues long: Large ribosomal subunit protein uL10 (172 aa).

This sequence belongs to the universal ribosomal protein uL10 family. Part of the ribosomal stalk of the 50S ribosomal subunit. The N-terminus interacts with L11 and the large rRNA to form the base of the stalk. The C-terminus forms an elongated spine to which L12 dimers bind in a sequential fashion forming a multimeric L10(L12)X complex.

Forms part of the ribosomal stalk, playing a central role in the interaction of the ribosome with GTP-bound translation factors. The protein is Large ribosomal subunit protein uL10 of Chlamydia trachomatis serovar L2 (strain ATCC VR-902B / DSM 19102 / 434/Bu).